The chain runs to 169 residues: uncharacterized protein (169 aa).

A helical transmembrane segment spans residues 55–77; the sequence is SLFIFKAVMILHTCLIVKSIRIF.

Its subcellular location is the membrane. This is an uncharacterized protein from Saccharomyces cerevisiae (strain ATCC 204508 / S288c) (Baker's yeast).